A 276-amino-acid chain; its full sequence is NAD-capped RNA hydrolase NudC (276 aa).

Arg-82 contributes to the substrate binding site. 2 residues coordinate Zn(2+): Cys-112 and Cys-115. Substrate is bound at residue Glu-125. Zn(2+)-binding residues include Cys-130 and Cys-133. Tyr-138 is a substrate binding site. The region spanning 139–262 (PRISPSMIVL…SIARYLIDLY (124 aa)) is the Nudix hydrolase domain. Positions 172, 188, and 192 each coordinate a divalent metal cation. The short motif at 173–194 (GFAEPGESAEDCLVREVREEVA) is the Nudix box element. 206 to 213 (QCWPFPHS) provides a ligand contact to substrate. Position 233 (Glu-233) interacts with a divalent metal cation. Ala-255 lines the substrate pocket.

This sequence belongs to the Nudix hydrolase family. NudC subfamily. In terms of assembly, homodimer. Mg(2+) is required as a cofactor. The cofactor is Mn(2+). It depends on Zn(2+) as a cofactor.

The enzyme catalyses a 5'-end NAD(+)-phospho-ribonucleoside in mRNA + H2O = a 5'-end phospho-adenosine-phospho-ribonucleoside in mRNA + beta-nicotinamide D-ribonucleotide + 2 H(+). It catalyses the reaction NAD(+) + H2O = beta-nicotinamide D-ribonucleotide + AMP + 2 H(+). It carries out the reaction NADH + H2O = reduced beta-nicotinamide D-ribonucleotide + AMP + 2 H(+). In terms of biological role, mRNA decapping enzyme that specifically removes the nicotinamide adenine dinucleotide (NAD) cap from a subset of mRNAs by hydrolyzing the diphosphate linkage to produce nicotinamide mononucleotide (NMN) and 5' monophosphate mRNA. The NAD-cap is present at the 5'-end of some mRNAs and stabilizes RNA against 5'-processing. Has preference for mRNAs with a 5'-end purine. Catalyzes the hydrolysis of a broad range of dinucleotide pyrophosphates. The sequence is that of NAD-capped RNA hydrolase NudC from Pseudomonas putida (strain ATCC 47054 / DSM 6125 / CFBP 8728 / NCIMB 11950 / KT2440).